The following is a 226-amino-acid chain: Gap junction beta-2 protein (226 aa).

The stretch at 2–13 (DWSALQTILGGV) is an intramembrane region. Topologically, residues 14-20 (NKHSTSI) are cytoplasmic. Residues 21–40 (GKIWLTVLFIFRIMILVVAA) form a helical membrane-spanning segment. Topologically, residues 41–73 (KEVWGDEQADFVCNTLQPGCKNVCYDHYFPISH) are extracellular. The Ca(2+) site is built by E42, G45, and E47. 3 disulfide bridges follow: C53–C180, C60–C174, and C64–C169. Residues 74 to 94 (IRLWALQLIFVSTPALLVAMH) traverse the membrane as a helical segment. Topologically, residues 95-135 (VAYYRHEKKRKFIRGEIKTEFKDIEEIKNQKVRIEGSLWWT) are cytoplasmic. Residues 136 to 156 (YTGSIFFRVIFEAAFMYVFYV) form a helical membrane-spanning segment. At 157-189 (MYDGFAMQRLVKCNAWPCPNTVDCFVSRPTEKT) the chain is on the extracellular side. A helical transmembrane segment spans residues 190-210 (VFTVFMIAVSGICILLNVTEL). Residues 211–226 (CYLLIRFCSGKSKKPV) lie on the Cytoplasmic side of the membrane.

It belongs to the connexin family. Beta-type (group I) subfamily. In terms of assembly, a hemichannel or connexon is composed of a hexamer of connexins. A functional gap junction is formed by the apposition of two hemichannels. Forms heteromeric channels with GJB4. Interacts with CNST.

It is found in the cell membrane. The protein resides in the cell junction. Its subcellular location is the gap junction. Functionally, structural component of gap junctions. Gap junctions are dodecameric channels that connect the cytoplasm of adjoining cells. They are formed by the docking of two hexameric hemichannels, one from each cell membrane. Small molecules and ions diffuse from one cell to a neighboring cell via the central pore. The sequence is that of Gap junction beta-2 protein (GJB2) from Ovis aries (Sheep).